Reading from the N-terminus, the 85-residue chain is Alpha-conotoxin Lt28.1 (85 aa).

The N-terminal stretch at 1-21 (MPKLEMMLLVLLILPLCYIDA) is a signal peptide. A propeptide spanning residues 22 to 40 (VGPPPPWNMEDEIIEHWQK) is cleaved from the precursor. Cystine bridges form between Cys-61–Cys-74, Cys-66–Cys-84, Cys-67–Cys-79, and Cys-72–Cys-81.

This sequence belongs to the conotoxin D superfamily. Expressed by the venom duct.

It is found in the secreted. In terms of biological role, alpha-conotoxins act on postsynaptic membranes, they bind to the nicotinic acetylcholine receptors (nAChR) and thus inhibit them. This toxin weakly inhibits alpha-9-alpha-10/CHRNA9-CHRNA10 nAChRs (IC(50)=3 uM). The chain is Alpha-conotoxin Lt28.1 from Conus litteratus (Lettered cone).